The sequence spans 250 residues: rRNA methyltransferase 2, mitochondrial (250 aa).

The N-terminal 35 residues, 1 to 35 (MRLVFTGNCVFKRLLHTEIGGKYAKQQPRNLKGRS), are a transit peptide targeting the mitochondrion. S-adenosyl-L-methionine contacts are provided by residues 90-93 (PGSW), Asp119, 136-137 (DF), and Asp161. Lys201 acts as the Proton acceptor in catalysis.

This sequence belongs to the class I-like SAM-binding methyltransferase superfamily. RNA methyltransferase RlmE family.

It is found in the mitochondrion. The catalysed reaction is a uridine in rRNA + S-adenosyl-L-methionine = a 2'-O-methyluridine in rRNA + S-adenosyl-L-homocysteine + H(+). In terms of biological role, S-adenosyl-L-methionine-dependent 2'-O-ribose methyltransferase that catalyzes the formation of 2'-O-methyluridine at position 1579 (Um1579) in the mitochondrial large subunit ribosomal RNA (mtLSU rRNA), a universally conserved modification in the peptidyl transferase domain of the mtLSU rRNA. This activity may require prior 2'-O-methylguanosine modification at position 1580 (Gm1580) by MRM3. Essential for late-stage assembly of mtLSU required for efficient translation of mitochondrial DNA encoded proteins; methyltransferase activity is not required for this function. Essential for mitochondrial respiratory function. The chain is rRNA methyltransferase 2, mitochondrial from Drosophila melanogaster (Fruit fly).